A 458-amino-acid chain; its full sequence is Bifunctional protein GlmU (458 aa).

The pyrophosphorylase stretch occupies residues 1–229 (MTNYAIILAA…FNESLGVNDR (229 aa)). UDP-N-acetyl-alpha-D-glucosamine is bound by residues 8-11 (LAAG), Lys-22, Gln-72, and 77-78 (GT). A Mg(2+)-binding site is contributed by Asp-102. UDP-N-acetyl-alpha-D-glucosamine-binding residues include Gly-139, Glu-154, Asn-169, and Asn-227. A Mg(2+)-binding site is contributed by Asn-227. The interval 230–250 (VALATAESVMRRRINKAHMIN) is linker. Residues 251-458 (GVTFQNPDAT…AKRLPHYPQK (208 aa)) form an N-acetyltransferase region. 2 residues coordinate UDP-N-acetyl-alpha-D-glucosamine: Arg-332 and Lys-350. His-362 serves as the catalytic Proton acceptor. Tyr-365 and Asn-376 together coordinate UDP-N-acetyl-alpha-D-glucosamine. Acetyl-CoA-binding positions include Ala-379, 385–386 (NY), Ser-404, Ala-422, and Arg-439.

The protein in the N-terminal section; belongs to the N-acetylglucosamine-1-phosphate uridyltransferase family. This sequence in the C-terminal section; belongs to the transferase hexapeptide repeat family. Homotrimer. Requires Mg(2+) as cofactor.

Its subcellular location is the cytoplasm. It carries out the reaction alpha-D-glucosamine 1-phosphate + acetyl-CoA = N-acetyl-alpha-D-glucosamine 1-phosphate + CoA + H(+). The catalysed reaction is N-acetyl-alpha-D-glucosamine 1-phosphate + UTP + H(+) = UDP-N-acetyl-alpha-D-glucosamine + diphosphate. The protein operates within nucleotide-sugar biosynthesis; UDP-N-acetyl-alpha-D-glucosamine biosynthesis; N-acetyl-alpha-D-glucosamine 1-phosphate from alpha-D-glucosamine 6-phosphate (route II): step 2/2. Its pathway is nucleotide-sugar biosynthesis; UDP-N-acetyl-alpha-D-glucosamine biosynthesis; UDP-N-acetyl-alpha-D-glucosamine from N-acetyl-alpha-D-glucosamine 1-phosphate: step 1/1. It participates in bacterial outer membrane biogenesis; LPS lipid A biosynthesis. In terms of biological role, catalyzes the last two sequential reactions in the de novo biosynthetic pathway for UDP-N-acetylglucosamine (UDP-GlcNAc). The C-terminal domain catalyzes the transfer of acetyl group from acetyl coenzyme A to glucosamine-1-phosphate (GlcN-1-P) to produce N-acetylglucosamine-1-phosphate (GlcNAc-1-P), which is converted into UDP-GlcNAc by the transfer of uridine 5-monophosphate (from uridine 5-triphosphate), a reaction catalyzed by the N-terminal domain. This chain is Bifunctional protein GlmU, found in Streptococcus uberis (strain ATCC BAA-854 / 0140J).